A 391-amino-acid chain; its full sequence is S-adenosylmethionine synthase (391 aa).

Residue His-14 coordinates ATP. Asp-16 provides a ligand contact to Mg(2+). Glu-42 lines the K(+) pocket. The L-methionine site is built by Glu-55 and Gln-98. Residues 98 to 108 form a flexible loop region; the sequence is QSPDIAMGVDE. Residues 172 to 174, 238 to 239, Asp-247, 253 to 254, Ala-270, and Lys-274 contribute to the ATP site; these read DGK, RF, and RK. Asp-247 lines the L-methionine pocket. Residue Lys-278 coordinates L-methionine.

Belongs to the AdoMet synthase family. As to quaternary structure, homotetramer; dimer of dimers. Mg(2+) is required as a cofactor. Requires K(+) as cofactor.

The protein resides in the cytoplasm. The enzyme catalyses L-methionine + ATP + H2O = S-adenosyl-L-methionine + phosphate + diphosphate. The protein operates within amino-acid biosynthesis; S-adenosyl-L-methionine biosynthesis; S-adenosyl-L-methionine from L-methionine: step 1/1. Catalyzes the formation of S-adenosylmethionine (AdoMet) from methionine and ATP. The overall synthetic reaction is composed of two sequential steps, AdoMet formation and the subsequent tripolyphosphate hydrolysis which occurs prior to release of AdoMet from the enzyme. The polypeptide is S-adenosylmethionine synthase (Clostridium tetani (strain Massachusetts / E88)).